The sequence spans 217 residues: Replication-associated protein A (217 aa).

Low complexity predominate over residues 1–17 (MRAPASSAASNRPGPSN). Residues 1–22 (MRAPASSAASNRPGPSNHPTPR) are disordered. A CRESS-DNA virus Rep endonuclease domain is found at 22–125 (RWNSKQFFLT…NGDSDEMGEL (104 aa)). The RCR-1 motif lies at 29–32 (FLTY). A divalent metal cation contacts are provided by E63, H71, and H73. Residues 71-73 (HLH) carry the RCR-2 motif. The active-site For DNA cleavage activity is Y111. The RCR-3 motif lies at 111–114 (YISK). Positions 176–188 (SAAALFTEPPPVY) are oligomerization.

Belongs to the geminiviridae Rep protein family. Homooligomer. Part of the C- and V-complexes which are RepA-Rep-DNA complexes involved in the c-sense and v-sense transcription.

It is found in the host nucleus. The protein resides in the host cytoplasm. Functionally, implicated in enhancement of V-sense gene expression. Acts a an inhibitor of C-sense gene transcription. This chain is Replication-associated protein A, found in Miscanthus sacchariflorus (MiSV).